A 146-amino-acid chain; its full sequence is Large ribosomal subunit protein bL17 (146 aa).

A disordered region spans residues 118-146 (RDPAAKGQDSGPKPEVASDEDEAGEAAAA). Positions 134–146 (ASDEDEAGEAAAA) are enriched in acidic residues.

It belongs to the bacterial ribosomal protein bL17 family. Part of the 50S ribosomal subunit. Contacts protein L32.

The chain is Large ribosomal subunit protein bL17 from Acidiphilium cryptum (strain JF-5).